Reading from the N-terminus, the 78-residue chain is Small ribosomal subunit protein bS18 (78 aa).

This sequence belongs to the bacterial ribosomal protein bS18 family. In terms of assembly, part of the 30S ribosomal subunit. Forms a tight heterodimer with protein bS6.

Binds as a heterodimer with protein bS6 to the central domain of the 16S rRNA, where it helps stabilize the platform of the 30S subunit. In Pseudothermotoga lettingae (strain ATCC BAA-301 / DSM 14385 / NBRC 107922 / TMO) (Thermotoga lettingae), this protein is Small ribosomal subunit protein bS18.